The sequence spans 279 residues: Orotidine 5'-phosphate decarboxylase (279 aa).

Substrate-binding positions include Asp8, Lys30, 58-67, Thr117, Arg177, Gln186, Gly206, and Arg207; that span reads DLKIHDIPNT. Lys60 (proton donor) is an active-site residue.

This sequence belongs to the OMP decarboxylase family. Type 1 subfamily. As to quaternary structure, homodimer.

It catalyses the reaction orotidine 5'-phosphate + H(+) = UMP + CO2. It functions in the pathway pyrimidine metabolism; UMP biosynthesis via de novo pathway; UMP from orotate: step 2/2. Functionally, catalyzes the decarboxylation of orotidine 5'-monophosphate (OMP) to uridine 5'-monophosphate (UMP). The sequence is that of Orotidine 5'-phosphate decarboxylase from Campylobacter jejuni (strain RM1221).